Here is a 273-residue protein sequence, read N- to C-terminus: Dermonecrotic toxin LdSicTox-alphaIB3aiv (273 aa).

The active site involves His-5. Residues Glu-25 and Asp-27 each coordinate Mg(2+). The active-site Nucleophile is the His-41. 2 disulfide bridges follow: Cys-45–Cys-51 and Cys-47–Cys-190. Asp-85 lines the Mg(2+) pocket.

It belongs to the arthropod phospholipase D family. Class II subfamily. The cofactor is Mg(2+). Expressed by the venom gland.

The protein resides in the secreted. The catalysed reaction is an N-(acyl)-sphingosylphosphocholine = an N-(acyl)-sphingosyl-1,3-cyclic phosphate + choline. It catalyses the reaction an N-(acyl)-sphingosylphosphoethanolamine = an N-(acyl)-sphingosyl-1,3-cyclic phosphate + ethanolamine. It carries out the reaction a 1-acyl-sn-glycero-3-phosphocholine = a 1-acyl-sn-glycero-2,3-cyclic phosphate + choline. The enzyme catalyses a 1-acyl-sn-glycero-3-phosphoethanolamine = a 1-acyl-sn-glycero-2,3-cyclic phosphate + ethanolamine. Dermonecrotic toxins cleave the phosphodiester linkage between the phosphate and headgroup of certain phospholipids (sphingolipid and lysolipid substrates), forming an alcohol (often choline) and a cyclic phosphate. This toxin acts on sphingomyelin (SM). It may also act on ceramide phosphoethanolamine (CPE), lysophosphatidylcholine (LPC) and lysophosphatidylethanolamine (LPE), but not on lysophosphatidylserine (LPS), and lysophosphatidylglycerol (LPG). It acts by transphosphatidylation, releasing exclusively cyclic phosphate products as second products. Induces dermonecrosis, hemolysis, increased vascular permeability, edema, inflammatory response, and platelet aggregation. In Loxosceles deserta (Desert recluse spider), this protein is Dermonecrotic toxin LdSicTox-alphaIB3aiv.